The sequence spans 131 residues: Small ribosomal subunit protein uS8 (131 aa).

This sequence belongs to the universal ribosomal protein uS8 family. Part of the 30S ribosomal subunit. Contacts proteins S5 and S12.

Its function is as follows. One of the primary rRNA binding proteins, it binds directly to 16S rRNA central domain where it helps coordinate assembly of the platform of the 30S subunit. The sequence is that of Small ribosomal subunit protein uS8 from Dechloromonas aromatica (strain RCB).